Here is a 766-residue protein sequence, read N- to C-terminus: MALAHTLGFPRIGRDRELKKAQEAFWKGELDEAGLRAVGRQLRAAHWQVQKDAGIQLLPVGDFAWYDQVLTHSLTFGVIPERFRAHGEAGPTLHTLFGMARGVSDDSCCGGAHAQEMTKWFDTNYHYLVPEFSADQQFQLSWEQLFEEVDEARALGHQVKPVLIGPLTYLWLGKAKGAEFDRLDLLDRLLPLYGQILRRLAGQGVEWVQIDEPILVLDLPQAWKNAFERAYNLLQSEPLKKLVATYFGGLEDNLGLAANLPVDGLHIDLVRAPEQYPSILDRLPAYKVVSLGLVNGRNVWRCDLEKALEVVRHARERLGERLWVAPSCSLLHSPVDLEREDGLDAELKSWLAFAVQKCREVAVLARAATEPEAAEVLAALEESRAVQASRASSPRIHKPAVQARLAAIKASDAQRRSPFAERIARQRAGLDLPAFPTTTIGSFPQTSSIRLARQSFKQGKLSEAEYIEAMHSEIRHAVQIQEQLGLDVLVHGEAERNDMVEYFAEQLDGYVFTRFGWVQSYGSRCVKPAVIYGDLSRPRAMTVEWIRYAQSLTDKVMKGMLTGPVTMLMWSFPREDVSREVQARQLALAIRDEVVDLEAAGIRIVQIDEAAFREGLPLRRNAWPHYLEWATEAFRLCASGVRDETQIHTHMCYSEFNDVIESIAAMDADVITIETSRSDMELLEAFEQFDYPNEIGPGVYDIHSPRVPSREEIVALLRKAARRIPAERLWVNPDCGLKTRAWPETEAALVNMVAAARELRGDLARG.

Residues 16 to 19 (RELK) and K119 each bind 5-methyltetrahydropteroyltri-L-glutamate. Residues 440-442 (IGS) and E493 contribute to the L-homocysteine site. L-methionine is bound by residues 440 to 442 (IGS) and E493. 5-methyltetrahydropteroyltri-L-glutamate is bound by residues 524–525 (RC) and W570. D608 contacts L-homocysteine. D608 is an L-methionine binding site. A 5-methyltetrahydropteroyltri-L-glutamate-binding site is contributed by E614. Zn(2+)-binding residues include H650, C652, and E674. Residue H703 is the Proton donor of the active site. Residue C735 coordinates Zn(2+).

The protein belongs to the vitamin-B12 independent methionine synthase family. The cofactor is Zn(2+).

It catalyses the reaction 5-methyltetrahydropteroyltri-L-glutamate + L-homocysteine = tetrahydropteroyltri-L-glutamate + L-methionine. The protein operates within amino-acid biosynthesis; L-methionine biosynthesis via de novo pathway; L-methionine from L-homocysteine (MetE route): step 1/1. In terms of biological role, catalyzes the transfer of a methyl group from 5-methyltetrahydrofolate to homocysteine resulting in methionine formation. The polypeptide is 5-methyltetrahydropteroyltriglutamate--homocysteine methyltransferase (Pseudomonas aeruginosa (strain UCBPP-PA14)).